The sequence spans 270 residues: tRNA (guanine-N(1)-)-methyltransferase (270 aa).

S-adenosyl-L-methionine is bound by residues Gly-119 and 139 to 144 (IGDYVI).

This sequence belongs to the RNA methyltransferase TrmD family. In terms of assembly, homodimer.

Its subcellular location is the cytoplasm. The catalysed reaction is guanosine(37) in tRNA + S-adenosyl-L-methionine = N(1)-methylguanosine(37) in tRNA + S-adenosyl-L-homocysteine + H(+). Functionally, specifically methylates guanosine-37 in various tRNAs. The protein is tRNA (guanine-N(1)-)-methyltransferase of Nitrosomonas europaea (strain ATCC 19718 / CIP 103999 / KCTC 2705 / NBRC 14298).